Reading from the N-terminus, the 301-residue chain is Mating type protein mtA-1 (301 aa).

The alpha box DNA-binding region spans 49 to 104; that stretch reads APKKKVNGFMGFRSYYSSLFSQFPQKARSPFMTILWQHDPFHNEWDFMCSVYSSIR.

This sequence belongs to the MATALPHA1 family.

Its subcellular location is the nucleus. Mating type proteins are sequence specific DNA-binding proteins that act as master switches in fungal differentiation by controlling gene expression in a cell type-specific fashion. Transcriptional activator that induces the transcription of alpha-specific genes. This Sordaria fimicola protein is Mating type protein mtA-1 (MTA1).